A 748-amino-acid polypeptide reads, in one-letter code: Peptidyl serine alpha-galactosyltransferase (748 aa).

Positions 1-26 (MVAVFHGPLVLGALLLLLALQHGASA) are cleaved as a signal peptide. Residues 27–710 (EEPGFANRTG…GPSLHSLLGR (684 aa)) are Extracellular-facing. 3 N-linked (GlcNAc...) asparagine glycosylation sites follow: Asn-33, Asn-184, and Asn-297. The ShKT domain maps to 415 to 449 (CQDFHPKCEEWKESGECTKNENYMTENCRKTCDKC). Intrachain disulfides connect Cys-415–Cys-449, Cys-422–Cys-442, and Cys-431–Cys-446. Disordered regions lie at residues 474–576 (ELQP…ADPK) and 611–670 (EVPK…KKNI). Positions 531–565 (SPPPSPPPASPPPVDSPPPMSPPPESPSPDKPPPK) are enriched in pro residues. A compositionally biased stretch (basic and acidic residues) spans 611-637 (EVPKRTKATDEEEEAPKAKHAESHLTL). A helical membrane pass occupies residues 711-731 (LNTWQALVLWLVVVVAFLALV). The Cytoplasmic segment spans residues 732–748 (PRIAKLRRRQRSGMRTE).

It depends on Mn(2+) as a cofactor.

The protein resides in the membrane. Glycosyltransferase involved in the O-galactosylation of several proteins including extensins. Catalyzes the transfer of alpha-galactosyl to Ser residues. Hydroxylation of proline residues adjacent to the serine acceptor is required for activity. Utilizes selectively UDP-galactose as a donor nucleotide sugar. The protein is Peptidyl serine alpha-galactosyltransferase of Chlamydomonas reinhardtii (Chlamydomonas smithii).